Reading from the N-terminus, the 303-residue chain is Aspartate carbamoyltransferase catalytic subunit (303 aa).

Residues arginine 49 and threonine 50 each coordinate carbamoyl phosphate. Lysine 77 is a binding site for L-aspartate. Residues arginine 99, histidine 126, and glutamine 129 each contribute to the carbamoyl phosphate site. Residues arginine 159 and arginine 211 each contribute to the L-aspartate site. Residues serine 252 and proline 253 each coordinate carbamoyl phosphate.

The protein belongs to the aspartate/ornithine carbamoyltransferase superfamily. ATCase family. As to quaternary structure, heterododecamer (2C3:3R2) of six catalytic PyrB chains organized as two trimers (C3), and six regulatory PyrI chains organized as three dimers (R2).

The enzyme catalyses carbamoyl phosphate + L-aspartate = N-carbamoyl-L-aspartate + phosphate + H(+). It functions in the pathway pyrimidine metabolism; UMP biosynthesis via de novo pathway; (S)-dihydroorotate from bicarbonate: step 2/3. In terms of biological role, catalyzes the condensation of carbamoyl phosphate and aspartate to form carbamoyl aspartate and inorganic phosphate, the committed step in the de novo pyrimidine nucleotide biosynthesis pathway. The chain is Aspartate carbamoyltransferase catalytic subunit from Listeria innocua serovar 6a (strain ATCC BAA-680 / CLIP 11262).